The following is a 243-amino-acid chain: Ribonuclease PH (243 aa).

Phosphate contacts are provided by residues Arg-91 and 129-131 (GTR).

It belongs to the RNase PH family. Homohexameric ring arranged as a trimer of dimers.

It carries out the reaction tRNA(n+1) + phosphate = tRNA(n) + a ribonucleoside 5'-diphosphate. Phosphorolytic 3'-5' exoribonuclease that plays an important role in tRNA 3'-end maturation. Removes nucleotide residues following the 3'-CCA terminus of tRNAs; can also add nucleotides to the ends of RNA molecules by using nucleoside diphosphates as substrates, but this may not be physiologically important. Probably plays a role in initiation of 16S rRNA degradation (leading to ribosome degradation) during starvation. The polypeptide is Ribonuclease PH (Burkholderia lata (strain ATCC 17760 / DSM 23089 / LMG 22485 / NCIMB 9086 / R18194 / 383)).